The primary structure comprises 936 residues: Isoleucine--tRNA ligase (936 aa).

The 'HIGH' region motif lies at 58–68 (PYANGRAHLGT). Glu-561 is an L-isoleucyl-5'-AMP binding site. A 'KMSKS' region motif is present at residues 602–606 (KMSKS). Lys-605 is a binding site for ATP. The Zn(2+) site is built by Cys-899, Cys-902, Cys-919, and Cys-922.

It belongs to the class-I aminoacyl-tRNA synthetase family. IleS type 1 subfamily. Monomer. The cofactor is Zn(2+).

Its subcellular location is the cytoplasm. The catalysed reaction is tRNA(Ile) + L-isoleucine + ATP = L-isoleucyl-tRNA(Ile) + AMP + diphosphate. In terms of biological role, catalyzes the attachment of isoleucine to tRNA(Ile). As IleRS can inadvertently accommodate and process structurally similar amino acids such as valine, to avoid such errors it has two additional distinct tRNA(Ile)-dependent editing activities. One activity is designated as 'pretransfer' editing and involves the hydrolysis of activated Val-AMP. The other activity is designated 'posttransfer' editing and involves deacylation of mischarged Val-tRNA(Ile). In Coxiella burnetii (strain CbuG_Q212) (Coxiella burnetii (strain Q212)), this protein is Isoleucine--tRNA ligase.